A 98-amino-acid polypeptide reads, in one-letter code: NADH-ubiquinone oxidoreductase chain 4L (98 aa).

3 helical membrane-spanning segments follow: residues 1-21, 25-45, and 59-81; these read MSLA…GLLM, HLMS…VMAT, and MPII…LVMV.

This sequence belongs to the complex I subunit 4L family. As to quaternary structure, core subunit of respiratory chain NADH dehydrogenase (Complex I) which is composed of 45 different subunits.

It localises to the mitochondrion inner membrane. It catalyses the reaction a ubiquinone + NADH + 5 H(+)(in) = a ubiquinol + NAD(+) + 4 H(+)(out). Functionally, core subunit of the mitochondrial membrane respiratory chain NADH dehydrogenase (Complex I) which catalyzes electron transfer from NADH through the respiratory chain, using ubiquinone as an electron acceptor. Part of the enzyme membrane arm which is embedded in the lipid bilayer and involved in proton translocation. This is NADH-ubiquinone oxidoreductase chain 4L (MT-ND4L) from Equus asinus (Donkey).